The following is a 570-amino-acid chain: High-affinity hexose transporter HXT6 (570 aa).

The Cytoplasmic segment spans residues 1-60; sequence MSQDAAIAEQTPVEHLSAVDSASHSVLSTPSNKAERDEIKAYGEGEEHEPVVEIPKRPAS. The helical transmembrane segment at 61–81 threads the bilayer; that stretch reads AYVTVSIMCIMIAFGGFVFGW. Over 82 to 116 the chain is Extracellular; the sequence is DTGTISGFINQTDFIRRFGMKHKDGTNYLSKVRTG. The N-linked (GlcNAc...) asparagine glycan is linked to Asn91. Residues 117–137 form a helical membrane-spanning segment; that stretch reads LIVSIFNIGCAIGGIILSKLG. Residues 138–143 lie on the Cytoplasmic side of the membrane; that stretch reads DMYGRK. A helical membrane pass occupies residues 144-164; sequence VGLIVVVVIYIIGIIIQIASI. Topologically, residues 165-174 are extracellular; the sequence is NKWYQYFIGR. Residues 175-195 form a helical membrane-spanning segment; that stretch reads IISGLGVGGIAVLSPMLISEV. At 196–201 the chain is on the cytoplasmic side; it reads SPKHLR. A helical transmembrane segment spans residues 202–222; sequence GTLVSCYQLMITAGIFLGYCT. Residues 223–236 lie on the Extracellular side of the membrane; the sequence is NFGTKNYSNSVQWR. Asn228 carries N-linked (GlcNAc...) asparagine glycosylation. A helical transmembrane segment spans residues 237 to 257; it reads VPLGLCFAWALFMIGGMTFVP. Topologically, residues 258 to 340 are cytoplasmic; that stretch reads ESPRYLAEVG…IQSLQQLTGD (83 aa). A helical membrane pass occupies residues 341–357; it reads NYFFYYGTTIFKAVGLS. Topologically, residues 358-363 are extracellular; it reads DSFETS. Residues 364–381 form a helical membrane-spanning segment; that stretch reads IVLGIVNFASTFVGIYVV. Topologically, residues 382–388 are cytoplasmic; that stretch reads ERYGRRT. A helical membrane pass occupies residues 389–409; it reads CLLWGAASMTACMVVYASVGV. Topologically, residues 410 to 431 are extracellular; it reads TRLWPNGQDQPSSKGAGNCMIV. A helical transmembrane segment spans residues 432–452; that stretch reads FACFYIFCFATTWAPIPYVVV. Residues 453-469 lie on the Cytoplasmic side of the membrane; the sequence is SETFPLRVKSKAMSIAT. The chain crosses the membrane as a helical span at residues 470–490; the sequence is AANWLWGFLIGFFTPFITGAI. Position 491 (Asn491) is a topological domain, extracellular. A helical transmembrane segment spans residues 492–512; that stretch reads FYYGYVFMGCLVFMFFYVLLV. At 513–570 the chain is on the cytoplasmic side; the sequence is VPETKGLTLEEVNTMWEEGVLPWKSASWVPPSRRGANYDAEEMAHDDKPLYKRMFSTK. A Glycyl lysine isopeptide (Lys-Gly) (interchain with G-Cter in ubiquitin) cross-link involves residue Lys560.

It belongs to the major facilitator superfamily. Sugar transporter (TC 2.A.1.1) family.

It localises to the membrane. In terms of biological role, high-affinity glucose transporter. The polypeptide is High-affinity hexose transporter HXT6 (HXT6) (Saccharomyces cerevisiae (strain ATCC 204508 / S288c) (Baker's yeast)).